We begin with the raw amino-acid sequence, 251 residues long: 5'-nucleotidase SurE (251 aa).

4 residues coordinate a divalent metal cation: aspartate 8, aspartate 9, serine 39, and asparagine 91.

This sequence belongs to the SurE nucleotidase family. The cofactor is a divalent metal cation.

It is found in the cytoplasm. It catalyses the reaction a ribonucleoside 5'-phosphate + H2O = a ribonucleoside + phosphate. Nucleotidase that shows phosphatase activity on nucleoside 5'-monophosphates. The sequence is that of 5'-nucleotidase SurE from Halorhodospira halophila (strain DSM 244 / SL1) (Ectothiorhodospira halophila (strain DSM 244 / SL1)).